We begin with the raw amino-acid sequence, 627 residues long: Protein EXECUTER 2, chloroplastic (627 aa).

Disordered regions lie at residues 1–34 (MSAA…PSAA), 212–277 (PTKG…AKDS), and 308–359 (EAEL…SKSP). The N-terminal 45 residues, 1–45 (MSAATACASPAAARPPLHIPLRSPPSAAHLPSAAASRRASSAACR), are a transit peptide targeting the chloroplast. Residues 217 to 229 (SSASSVSSATAES) are compositionally biased toward low complexity. 2 stretches are compositionally biased toward acidic residues: residues 308-321 (EAEL…ELVQ) and 331-353 (SLED…SDSA).

It is found in the plastid. The protein localises to the chloroplast. In terms of biological role, together with EX1, enables higher plants to perceive singlet oxygen as a stress signal in plastid that activates a genetically determined nuclear stress response program which triggers a programmed cell death (PCD). This transfer of singlet oxygen-induced stress-related signals from the plastid to the nucleus that triggers genetically controlled PCD pathway is unique to photosynthetic eukaryotes and operates under mild stress conditions, impeding photosystem II (PSII) without causing photooxidative damage of the plant. The protein is Protein EXECUTER 2, chloroplastic of Oryza sativa subsp. japonica (Rice).